We begin with the raw amino-acid sequence, 196 residues long: Large ribosomal subunit protein uL6 (196 aa).

The protein belongs to the universal ribosomal protein uL6 family. Part of the 50S ribosomal subunit.

This protein binds to the 23S rRNA, and is important in its secondary structure. It is located near the subunit interface in the base of the L7/L12 stalk, and near the tRNA binding site of the peptidyltransferase center. This chain is Large ribosomal subunit protein uL6, found in Pyrobaculum aerophilum (strain ATCC 51768 / DSM 7523 / JCM 9630 / CIP 104966 / NBRC 100827 / IM2).